Here is a 204-residue protein sequence, read N- to C-terminus: Leucyl/phenylalanyl-tRNA--protein transferase (204 aa).

This sequence belongs to the L/F-transferase family.

The protein localises to the cytoplasm. It carries out the reaction N-terminal L-lysyl-[protein] + L-leucyl-tRNA(Leu) = N-terminal L-leucyl-L-lysyl-[protein] + tRNA(Leu) + H(+). The catalysed reaction is N-terminal L-arginyl-[protein] + L-leucyl-tRNA(Leu) = N-terminal L-leucyl-L-arginyl-[protein] + tRNA(Leu) + H(+). The enzyme catalyses L-phenylalanyl-tRNA(Phe) + an N-terminal L-alpha-aminoacyl-[protein] = an N-terminal L-phenylalanyl-L-alpha-aminoacyl-[protein] + tRNA(Phe). Functionally, functions in the N-end rule pathway of protein degradation where it conjugates Leu, Phe and, less efficiently, Met from aminoacyl-tRNAs to the N-termini of proteins containing an N-terminal arginine or lysine. The sequence is that of Leucyl/phenylalanyl-tRNA--protein transferase from Rhizobium leguminosarum bv. trifolii (strain WSM2304).